The following is a 97-amino-acid chain: Gibberellin-regulated protein 5 (97 aa).

The signal sequence occupies residues 1–27 (MANCIRRNALFFLTLLFLLSVSNLVQA).

Belongs to the GASA family. In terms of processing, six disulfide bonds may be present. Expressed in roots, root hairs, vasculature of cotyledons and hypocotyls, shoot apex, leaf veins, stems, flower receptacles, pollen, filaments, anthers and siliques.

It is found in the secreted. The protein localises to the cell wall. The protein resides in the extracellular space. Its subcellular location is the extracellular matrix. Its function is as follows. Gibberellin-regulated protein that acts as a negative regulator of gibberellin-induced flowering and stem growth. May inhibit flowering and inflorescence growth via a pathway involving GAI and by enhancing FLC expression and repressing FT and LFY. Acts as a negative regulator in thermotolerance by resogulating both salicylic acid (SA) signaling and heat shock-protein accumulation. The protein is Gibberellin-regulated protein 5 (GASA5) of Arabidopsis thaliana (Mouse-ear cress).